Reading from the N-terminus, the 556-residue chain is 2-isopropylmalate synthase (556 aa).

The Pyruvate carboxyltransferase domain maps to 33–307 (PIWCSSDLRD…NPGLDFSDID (275 aa)). Mg(2+) contacts are provided by D42, H246, H248, and N282. The interval 439–556 (ANVPYALISH…SLSQTQAKAA (118 aa)) is regulatory domain.

The protein belongs to the alpha-IPM synthase/homocitrate synthase family. LeuA type 2 subfamily. Homodimer. Requires Mg(2+) as cofactor.

It is found in the cytoplasm. The catalysed reaction is 3-methyl-2-oxobutanoate + acetyl-CoA + H2O = (2S)-2-isopropylmalate + CoA + H(+). The protein operates within amino-acid biosynthesis; L-leucine biosynthesis; L-leucine from 3-methyl-2-oxobutanoate: step 1/4. In terms of biological role, catalyzes the condensation of the acetyl group of acetyl-CoA with 3-methyl-2-oxobutanoate (2-ketoisovalerate) to form 3-carboxy-3-hydroxy-4-methylpentanoate (2-isopropylmalate). This is 2-isopropylmalate synthase from Pseudomonas syringae pv. syringae (strain B728a).